Consider the following 509-residue polypeptide: Meiotically up-regulated gene 157 protein (509 aa).

5 helical membrane passes run 4 to 24 (WQAI…NIPW), 140 to 160 (LATL…QFPY), 296 to 316 (ACVL…LSHL), 368 to 388 (ILFM…LGFV), and 417 to 437 (ISGI…SLIV).

The protein resides in the endoplasmic reticulum membrane. In terms of biological role, has a role in meiosis. The sequence is that of Meiotically up-regulated gene 157 protein (mug157) from Schizosaccharomyces pombe (strain 972 / ATCC 24843) (Fission yeast).